A 276-amino-acid chain; its full sequence is Diaminopimelate epimerase (276 aa).

Asn13, Gln46, and Asn66 together coordinate substrate. Cys75 acts as the Proton donor in catalysis. Substrate-binding positions include 76-77 (GN), Asn159, Asn192, and 210-211 (ER). The active-site Proton acceptor is the Cys219. 220–221 (GS) is a binding site for substrate.

Belongs to the diaminopimelate epimerase family. In terms of assembly, homodimer.

It localises to the cytoplasm. The catalysed reaction is (2S,6S)-2,6-diaminopimelate = meso-2,6-diaminopimelate. It participates in amino-acid biosynthesis; L-lysine biosynthesis via DAP pathway; DL-2,6-diaminopimelate from LL-2,6-diaminopimelate: step 1/1. Its function is as follows. Catalyzes the stereoinversion of LL-2,6-diaminopimelate (L,L-DAP) to meso-diaminopimelate (meso-DAP), a precursor of L-lysine and an essential component of the bacterial peptidoglycan. The sequence is that of Diaminopimelate epimerase from Pseudoalteromonas atlantica (strain T6c / ATCC BAA-1087).